Here is a 909-residue protein sequence, read N- to C-terminus: Probable dipeptidyl-aminopeptidase B (909 aa).

Residues 1–63 (MRVGSRINDE…HNHNGRAQGN (63 aa)) form a disordered region. Residues 1 to 94 (MRVGSRINDE…NGKSNQRRTL (94 aa)) are Cytoplasmic-facing. Positions 27–38 (DSSSTASISLTL) are enriched in low complexity. Residues 95-115 (IVFWLLVALCVGGWAVAFLFF) traverse the membrane as a helical; Signal-anchor for type II membrane protein segment. Topologically, residues 116–909 (VTSPGNKTST…YSNFLPIRSF (794 aa)) are vacuolar. N-linked (GlcNAc...) asparagine glycosylation is present at Asn-121. The segment covering 123 to 134 (TSTSPHSGSNSP) has biased composition (polar residues). Positions 123-144 (TSTSPHSGSNSPEGDVTKPGIP) are disordered. Asn-207, Asn-303, and Asn-355 each carry an N-linked (GlcNAc...) asparagine glycan. The active-site Charge relay system is the Ser-760. 3 N-linked (GlcNAc...) asparagine glycosylation sites follow: Asn-814, Asn-819, and Asn-822. Catalysis depends on charge relay system residues Asp-837 and His-870. A glycan (N-linked (GlcNAc...) asparagine) is linked at Asn-888.

The protein belongs to the peptidase S9B family.

Its subcellular location is the vacuole membrane. It catalyses the reaction Release of an N-terminal dipeptide, Xaa-Yaa-|-Zaa-, from a polypeptide, preferentially when Yaa is Pro, provided Zaa is neither Pro nor hydroxyproline.. Its function is as follows. Type IV dipeptidyl-peptidase which removes N-terminal dipeptides sequentially from polypeptides having unsubstituted N-termini provided that the penultimate residue is proline. This chain is Probable dipeptidyl-aminopeptidase B (DAPB), found in Arthroderma benhamiae (strain ATCC MYA-4681 / CBS 112371) (Trichophyton mentagrophytes).